Reading from the N-terminus, the 216-residue chain is MDWMWLLSGACIVFTLGMFSSGLSDLRVMVAQRSVENIQYLPFLTTDLNNLGWFYYGYLKGDGTLMIVNVIGASLQSLYMGAYLLYSPERRYVGSQVLVSLGVLLLGYCYFTLWILDLNSRLNQLGLFCSVFTISMYLSPLADLAQIIRSKSTKCLSFPLTVATFLTSSSWVLYGLVQSDLYITVPNFPGIVTSLVRFWLFSQFPPDPPTYRLLQA.

7 consecutive transmembrane segments (helical) span residues 3 to 23 (WMWL…SSGL), 36 to 56 (ENIQ…WFYY), 65 to 85 (LMIV…AYLL), 96 to 116 (QVLV…LWIL), 125 to 145 (LGLF…ADLA), 157 to 177 (SFPL…YGLV), and 181 to 201 (LYIT…FWLF). The 85-residue stretch at 6 to 90 (LLSGACIVFT…GAYLLYSPER (85 aa)) folds into the MtN3/slv 1 domain. One can recognise a MtN3/slv 2 domain in the interval 124-206 (QLGLFCSVFT…RFWLFSQFPP (83 aa)).

It belongs to the SWEET sugar transporter family.

The protein localises to the golgi apparatus membrane. It is found in the cell membrane. Functionally, mediates sugar transport across membranes. This is Sugar transporter SWEET1 (slc50a1) from Xenopus laevis (African clawed frog).